We begin with the raw amino-acid sequence, 467 residues long: Uronate isomerase (467 aa).

The protein belongs to the metallo-dependent hydrolases superfamily. Uronate isomerase family.

The catalysed reaction is D-glucuronate = D-fructuronate. It catalyses the reaction aldehydo-D-galacturonate = keto-D-tagaturonate. It functions in the pathway carbohydrate metabolism; pentose and glucuronate interconversion. The polypeptide is Uronate isomerase (Streptococcus uberis (strain ATCC BAA-854 / 0140J)).